The primary structure comprises 419 residues: Serine hydroxymethyltransferase (419 aa).

(6S)-5,6,7,8-tetrahydrofolate contacts are provided by residues Leu-122 and Gly-126–Leu-128. Lys-231 carries the N6-(pyridoxal phosphate)lysine modification. Ser-354 to Phe-356 lines the (6S)-5,6,7,8-tetrahydrofolate pocket.

This sequence belongs to the SHMT family. As to quaternary structure, homodimer. Pyridoxal 5'-phosphate is required as a cofactor.

The protein resides in the cytoplasm. It carries out the reaction (6R)-5,10-methylene-5,6,7,8-tetrahydrofolate + glycine + H2O = (6S)-5,6,7,8-tetrahydrofolate + L-serine. It functions in the pathway one-carbon metabolism; tetrahydrofolate interconversion. Its pathway is amino-acid biosynthesis; glycine biosynthesis; glycine from L-serine: step 1/1. Its function is as follows. Catalyzes the reversible interconversion of serine and glycine with tetrahydrofolate (THF) serving as the one-carbon carrier. This reaction serves as the major source of one-carbon groups required for the biosynthesis of purines, thymidylate, methionine, and other important biomolecules. Also exhibits THF-independent aldolase activity toward beta-hydroxyamino acids, producing glycine and aldehydes, via a retro-aldol mechanism. This is Serine hydroxymethyltransferase from Exiguobacterium sibiricum (strain DSM 17290 / CCUG 55495 / CIP 109462 / JCM 13490 / 255-15).